A 438-amino-acid chain; its full sequence is Glutamyl-tRNA(Gln) amidotransferase subunit D (438 aa).

The Asparaginase/glutaminase domain occupies proline 92–asparagine 422. Catalysis depends on residues threonine 102, threonine 178, aspartate 179, and lysine 256.

This sequence belongs to the asparaginase 1 family. GatD subfamily. Heterodimer of GatD and GatE.

It carries out the reaction L-glutamyl-tRNA(Gln) + L-glutamine + ATP + H2O = L-glutaminyl-tRNA(Gln) + L-glutamate + ADP + phosphate + H(+). In terms of biological role, allows the formation of correctly charged Gln-tRNA(Gln) through the transamidation of misacylated Glu-tRNA(Gln) in organisms which lack glutaminyl-tRNA synthetase. The reaction takes place in the presence of glutamine and ATP through an activated gamma-phospho-Glu-tRNA(Gln). The GatDE system is specific for glutamate and does not act on aspartate. This Pyrococcus horikoshii (strain ATCC 700860 / DSM 12428 / JCM 9974 / NBRC 100139 / OT-3) protein is Glutamyl-tRNA(Gln) amidotransferase subunit D.